A 152-amino-acid polypeptide reads, in one-letter code: MYPAHLLVLLAVCVSLLGASNIPLPSLDFEQFGKMIQCTIPCEESCLAYMDYGCYCGPGGSGTPSDELDRCCQTHDNCYAEAGKLPACKAMLSEPYNDTYSYSCIERQLTCNDDNDECKAFICNCDRAAVICFSGAPYNDSNYDIGTIEHCK.

The first 19 residues, 1 to 19 (MYPAHLLVLLAVCVSLLGA), serve as a signal peptide directing secretion. The propeptide occupies 20–27 (SNIPLPSL). Intrachain disulfides connect Cys-38–Cys-104, Cys-54–Cys-151, Cys-56–Cys-72, Cys-71–Cys-132, Cys-78–Cys-125, Cys-88–Cys-118, and Cys-111–Cys-123. Ca(2+) is bound by residues Tyr-55, Gly-57, and Gly-59. Residue His-75 is part of the active site. Asp-76 provides a ligand contact to Ca(2+). Residue Asp-126 is part of the active site.

It belongs to the phospholipase A2 family. Group I subfamily. D49 sub-subfamily. Ca(2+) is required as a cofactor. Expressed by the venom gland.

The protein resides in the secreted. The catalysed reaction is a 1,2-diacyl-sn-glycero-3-phosphocholine + H2O = a 1-acyl-sn-glycero-3-phosphocholine + a fatty acid + H(+). Its function is as follows. Snake venom phospholipase A2 (PLA2) that inhibits collagen-induced platelet aggregation. PLA2 catalyzes the calcium-dependent hydrolysis of the 2-acyl groups in 3-sn-phosphoglycerides. This Austrelaps superbus (Lowland copperhead snake) protein is Acidic phospholipase A2 S17-58.